The sequence spans 977 residues: ATP-dependent RNA helicase DBP10 (977 aa).

Residues 1–121 form a disordered region; that stretch reads MGIISKRKRH…NSEKSKHKKG (121 aa). Over residues 26–35 the composition is skewed to polar residues; that stretch reads ITSNIGLNTA. Residues 37-61 show a composition bias toward acidic residues; the sequence is SSDESESSGDDEEEVQDIVDFSDEE. The segment covering 70 to 81 has biased composition (polar residues); sequence SNKTLTDNNSFP. The Q motif motif lies at 121-149; it reads GSFPSFGFSKLILSNVHKKGFRQPTPIQR. Residues 152–324 form the Helicase ATP-binding domain; it reads IPLILQKRDI…KAGLTNPVLV (173 aa). 165–172 serves as a coordination point for ATP; it reads ARTGSGKT. The DEAD box signature appears at 272–275; the sequence is DEAD. Disordered stretches follow at residues 377–403 and 871–977; these read NKSL…KKGK and KTGA…KRKF. Positions 394-403 are enriched in basic residues; sequence QNSRKSKKGK. The Helicase C-terminal domain occupies 403–554; the sequence is KFQKLKVSAS…SMYEASCKLM (152 aa). Over residues 878-894 the composition is skewed to polar residues; that stretch reads SIPTNLLSDPTTDSGSQ. Over residues 910–921 the composition is skewed to basic and acidic residues; that stretch reads RLPDKFRDDYQS. Residues 961–977 show a composition bias toward basic residues; the sequence is KEKKRQKNARPTKKRKF.

This sequence belongs to the DEAD box helicase family. DDX54/DBP10 subfamily.

Its subcellular location is the nucleus. The protein resides in the nucleolus. It carries out the reaction ATP + H2O = ADP + phosphate + H(+). Functionally, ATP-binding RNA helicase involved in the biogenesis of 60S ribosomal subunits and is required for the normal formation of 25S and 5.8S rRNAs. The protein is ATP-dependent RNA helicase DBP10 (DBP10) of Vanderwaltozyma polyspora (strain ATCC 22028 / DSM 70294 / BCRC 21397 / CBS 2163 / NBRC 10782 / NRRL Y-8283 / UCD 57-17) (Kluyveromyces polysporus).